Consider the following 762-residue polypeptide: 5-methyltetrahydropteroyltriglutamate--homocysteine methyltransferase (762 aa).

Residues 18–21 (REWK) and lysine 112 contribute to the 5-methyltetrahydropteroyltri-L-glutamate site. L-homocysteine-binding positions include 435–437 (IGS) and glutamate 488. L-methionine is bound by residues 435–437 (IGS) and glutamate 488. 5-methyltetrahydropteroyltri-L-glutamate-binding positions include 519-520 (RC) and tryptophan 565. Aspartate 603 contacts L-homocysteine. Position 603 (aspartate 603) interacts with L-methionine. Residue glutamate 609 coordinates 5-methyltetrahydropteroyltri-L-glutamate. Residues histidine 645, cysteine 647, and glutamate 669 each contribute to the Zn(2+) site. The active-site Proton donor is the histidine 698. Cysteine 719 is modified (S-bacillithiol cysteine disulfide). Residue cysteine 730 participates in Zn(2+) binding.

Belongs to the vitamin-B12 independent methionine synthase family. Requires Zn(2+) as cofactor. In terms of processing, in response to oxidative stress, Cys-719 can react with bacillithiol (BSH) to form mixed disulfides. S-bacillithiolation leads to loss of catalytic activity and methionine auxotrophy.

The catalysed reaction is 5-methyltetrahydropteroyltri-L-glutamate + L-homocysteine = tetrahydropteroyltri-L-glutamate + L-methionine. The protein operates within amino-acid biosynthesis; L-methionine biosynthesis via de novo pathway; L-methionine from L-homocysteine (MetE route): step 1/1. Catalyzes the transfer of a methyl group from 5-methyltetrahydrofolate to homocysteine resulting in methionine formation. The sequence is that of 5-methyltetrahydropteroyltriglutamate--homocysteine methyltransferase from Bacillus subtilis (strain 168).